Reading from the N-terminus, the 361-residue chain is Peptide chain release factor 1 (361 aa).

At glutamine 235 the chain carries N5-methylglutamine. Positions 287–309 (QKEASAMRSAQVGSGDRSERIRT) are disordered.

Belongs to the prokaryotic/mitochondrial release factor family. Post-translationally, methylated by PrmC. Methylation increases the termination efficiency of RF1.

It is found in the cytoplasm. Peptide chain release factor 1 directs the termination of translation in response to the peptide chain termination codons UAG and UAA. This is Peptide chain release factor 1 from Chlamydia caviae (strain ATCC VR-813 / DSM 19441 / 03DC25 / GPIC) (Chlamydophila caviae).